Reading from the N-terminus, the 145-residue chain is Large ribosomal subunit protein uL13 (145 aa).

Belongs to the universal ribosomal protein uL13 family. As to quaternary structure, part of the 50S ribosomal subunit.

This protein is one of the early assembly proteins of the 50S ribosomal subunit, although it is not seen to bind rRNA by itself. It is important during the early stages of 50S assembly. This Bacillus thuringiensis (strain Al Hakam) protein is Large ribosomal subunit protein uL13.